The primary structure comprises 445 residues: Xylose isomerase (445 aa).

Active-site residues include H107 and D110. Mg(2+) contacts are provided by E238, E274, H277, D302, D313, D315, and D345.

Belongs to the xylose isomerase family. In terms of assembly, homotetramer. Mg(2+) serves as cofactor.

The protein resides in the cytoplasm. It catalyses the reaction alpha-D-xylose = alpha-D-xylulofuranose. In Bacillus spizizenii (strain ATCC 23059 / NRRL B-14472 / W23) (Bacillus subtilis subsp. spizizenii), this protein is Xylose isomerase (xylA).